Consider the following 396-residue polypeptide: Ornithine aminotransferase (396 aa).

The residue at position 255 (lysine 255) is an N6-(pyridoxal phosphate)lysine.

Belongs to the class-III pyridoxal-phosphate-dependent aminotransferase family. OAT subfamily. Requires pyridoxal 5'-phosphate as cofactor.

The protein resides in the cytoplasm. It carries out the reaction a 2-oxocarboxylate + L-ornithine = L-glutamate 5-semialdehyde + an L-alpha-amino acid. The protein operates within amino-acid biosynthesis; L-proline biosynthesis; L-glutamate 5-semialdehyde from L-ornithine: step 1/1. In terms of biological role, catalyzes the interconversion of ornithine to glutamate semialdehyde. The chain is Ornithine aminotransferase from Bacillus anthracis (strain A0248).